Consider the following 127-residue polypeptide: Probable 4-amino-4-deoxy-L-arabinose-phosphoundecaprenol flippase subunit ArnF (127 aa).

The helical transmembrane segment at 1–21 (MMGYFWALMSVLLVSGAQLMM) threads the bilayer. Over 22–48 (KWAMVSLPPVGQTDALMSAFMSVTPGA) the chain is Periplasmic. A helical membrane pass occupies residues 49–69 (VALVIGLFAYVFSMGCWYMAL). Topologically, residues 70–77 (RRIALSKA) are cytoplasmic. A helical transmembrane segment spans residues 78-98 (YPLLSLSYVLVWAAAIGLPWL). The Periplasmic portion of the chain corresponds to 99–101 (HEP). A helical membrane pass occupies residues 102-122 (FSVGKLAGVSVIFVGLLLVCL). Topologically, residues 123–127 (PDKKS) are cytoplasmic.

This sequence belongs to the ArnF family. In terms of assembly, heterodimer of ArnE and ArnF.

The protein resides in the cell inner membrane. The protein operates within bacterial outer membrane biogenesis; lipopolysaccharide biosynthesis. In terms of biological role, translocates 4-amino-4-deoxy-L-arabinose-phosphoundecaprenol (alpha-L-Ara4N-phosphoundecaprenol) from the cytoplasmic to the periplasmic side of the inner membrane. In Enterobacter sp. (strain 638), this protein is Probable 4-amino-4-deoxy-L-arabinose-phosphoundecaprenol flippase subunit ArnF.